We begin with the raw amino-acid sequence, 694 residues long: Soluble starch synthase 2-2, chloroplastic/amyloplastic (694 aa).

A chloroplast-targeting transit peptide spans 1–15; sequence MSGAIASSPAATLFL. Residues 93–197 are disordered; the sequence is KADHVEDSVS…DSENKESGPL (105 aa). Low complexity predominate over residues 127 to 142; the sequence is APVSKPKVDPSVPASK. A compositionally biased stretch (basic and acidic residues) spans 156-176; sequence AALDKKEDVGVAEPLEAKADA. A compositionally biased stretch (low complexity) spans 177-186; it reads GGDAGAVSSA. Lys217 provides a ligand contact to ADP-alpha-D-glucose.

The protein belongs to the glycosyltransferase 1 family. Bacterial/plant glycogen synthase subfamily. In terms of tissue distribution, expressed in leaves and weakly in endosperm and roots.

It localises to the plastid. It is found in the amyloplast. The protein localises to the chloroplast. It catalyses the reaction [(1-&gt;4)-alpha-D-glucosyl](n) + ADP-alpha-D-glucose = [(1-&gt;4)-alpha-D-glucosyl](n+1) + ADP + H(+). The protein operates within glycan biosynthesis; starch biosynthesis. May contribute to the deposition of transient starch in chloroplasts of leaves. This chain is Soluble starch synthase 2-2, chloroplastic/amyloplastic (SSII-2), found in Oryza sativa subsp. japonica (Rice).